Consider the following 517-residue polypeptide: Lysophosphatidylcholine acyltransferase 2B (517 aa).

The N-linked (GlcNAc...) asparagine glycan is linked to N29. The next 3 membrane-spanning stretches (helical) occupy residues 70 to 90 (IVFL…NLPI), 103 to 123 (LIKP…GFLI), and 137 to 157 (IFVV…VAGL). The short motif at 143-148 (HSTFFD) is the HXXXXD motif element. EF-hand domains follow at residues 388–423 (PISE…LCNP) and 425–460 (NTEK…AFGV). Ca(2+) is bound by residues D401, N403, D405, T407, E412, D438, D440, D442, Y444, and E449.

This sequence belongs to the 1-acyl-sn-glycerol-3-phosphate acyltransferase family.

Its subcellular location is the membrane. The protein operates within lipid metabolism; phospholipid metabolism. Functionally, probable acetyltransferase. This Rattus norvegicus (Rat) protein is Lysophosphatidylcholine acyltransferase 2B (Lpcat2b).